Here is a 177-residue protein sequence, read N- to C-terminus: Probable DNA-directed RNA polymerase subunit delta (177 aa).

Positions 14-81 (CSMIEVVHSV…GENRWGLRSW (68 aa)) constitute an HTH HARE-type domain. Residues 91–177 (ILPQPKPKKK…DETEEEEEEL (87 aa)) are disordered. Residues 106–177 (DGFDDYIEED…DETEEEEEEL (72 aa)) show a composition bias toward acidic residues.

Belongs to the RpoE family. As to quaternary structure, RNAP is composed of a core of 2 alpha, a beta and a beta' subunits. The core is associated with a delta subunit and one of several sigma factors.

In terms of biological role, participates in both the initiation and recycling phases of transcription. In the presence of the delta subunit, RNAP displays an increased specificity of transcription, a decreased affinity for nucleic acids, and an increased efficiency of RNA synthesis because of enhanced recycling. This Bacillus cereus (strain G9842) protein is Probable DNA-directed RNA polymerase subunit delta.